Reading from the N-terminus, the 489-residue chain is Cytochrome P450 monooxygenase ataF (489 aa).

A helical membrane pass occupies residues 12–32 (WLEHSAVIATLFAFGTALFLV). An N-linked (GlcNAc...) asparagine glycan is attached at N289. C434 is a binding site for heme.

It belongs to the cytochrome P450 family. The cofactor is heme.

It is found in the membrane. It functions in the pathway mycotoxin biosynthesis. Cytochrome P450 monooxygenase; part of the gene cluster that mediates the biosynthesis of acetylaranotin, a member of the epipolythiodioxopiperazine (ETP) class of toxins characterized by a disulfide-bridged cyclic dipeptide. The first step of acetylaranotin biosynthesis is performed by the NRPS ataP which produces diketopiperazine cyclo-L-Phe-L-Phe via the condensation of 2 phenylalanines (L-Phe). The ataC domain of ataTC then catalyzes the formation of bishydroxylation of cyclo-L-Phe-L-Phe. The glutathione S-transferase domain ataG in ataIMG further catalyzes the conjugation of two glutathiones to the bishydroxylated intermediate. Next, the dipeptidase ataJ removes the Glu residues. The following step is performed by the carbon sulfur lyase domain ataI of ataIMG which may convert the bis-cysteinyl adduct to yield an epidithiol intermediate. The ataT domain from ataTC then catalyzes the oxidation of the free dithiols, followed by a cyclization step catalyzed by the cytochrome P450 ataF. AtaF probably acts as an epoxidase to promote a dual epoxidation formation at C8 and C9 along with C8' and C9', followed by the spontaneous nucleophilic attack of the amide nitrogens N10 and N10' to yield an intermediate with the pyrrolidine partial structure. The final steps of acetylaranotin biosynthesis involve the acetylation and ring rearrangement of an epitetrathiodiketopiperazine intermediate to produce acetylaranotin. AtaH probably catalyzes the acetylation of epitetrathiodiketopiperazine to produce a diacetate and ataY is responsible for the formation of the dihydrooxepin moiety that converts the diacetate intermediate to acetylaranotin via acetylapoaranotin. Both enzymes could function independently in the absence of the other. The acetylaranotin bis-thiomethyltransferase ataS located outside of acetylaranotin gene cluster is the main thiomethyltransferase responsible for converting acetylaranotin and its related intermediates to their methylated forms. This chain is Cytochrome P450 monooxygenase ataF, found in Aspergillus terreus (strain NIH 2624 / FGSC A1156).